We begin with the raw amino-acid sequence, 306 residues long: 2-dehydro-3-deoxy-D-gluconate/2-dehydro-3-deoxy-phosphogluconate aldolase (306 aa).

Substrate-binding positions include 61 to 62 (TT), 148 to 150 (YNY), and 173 to 175 (KDT). Catalysis depends on Lys173, which acts as the Schiff-base intermediate with substrate.

It belongs to the DapA family. KDPG aldolase subfamily. In terms of assembly, homotetramer; dimer of dimers.

It carries out the reaction 2-dehydro-3-deoxy-6-phospho-D-gluconate = D-glyceraldehyde 3-phosphate + pyruvate. The enzyme catalyses 2-dehydro-3-deoxy-D-gluconate = D-glyceraldehyde + pyruvate. It functions in the pathway carbohydrate acid metabolism; 2-dehydro-3-deoxy-D-gluconate degradation; D-glyceraldehyde 3-phosphate and pyruvate from 2-dehydro-3-deoxy-D-gluconate: step 2/2. In terms of biological role, involved in the degradation of glucose via the Entner-Doudoroff pathway. Catalyzes the reversible cleavage of 2-keto-3-deoxy-6-phosphogluconate (KDPG) and 2-keto-3-deoxygluconate (KDG) forming pyruvate and glyceraldehyde 3-phosphate or glyceraldehyde, respectively. It is not able to use 2-keto-3-deoxy-6-phosphogalactonate (KDPGal) and 2-keto-3-deoxygalactonate (KDGal) as substrate. In Thermoproteus tenax, this protein is 2-dehydro-3-deoxy-D-gluconate/2-dehydro-3-deoxy-phosphogluconate aldolase (kdgA).